A 137-amino-acid polypeptide reads, in one-letter code: Large ribosomal subunit protein uL16 (137 aa).

Belongs to the universal ribosomal protein uL16 family. As to quaternary structure, part of the 50S ribosomal subunit.

In terms of biological role, binds 23S rRNA and is also seen to make contacts with the A and possibly P site tRNAs. In Ruegeria sp. (strain TM1040) (Silicibacter sp.), this protein is Large ribosomal subunit protein uL16.